We begin with the raw amino-acid sequence, 603 residues long: Autophagy-related protein 22 (603 aa).

4 consecutive transmembrane segments (helical) span residues 46–66 (YGWAAEVFAVCAMGSFLPITL), 122–142 (TASFAMYTFSISVLIQSVLII), 157–177 (FLLAFALMGALSMILFLFLLP), and 181–201 (LLAAVLAIIANTGFGASFVLL). A glycan (N-linked (GlcNAc...) asparagine) is linked at Asn-254. 8 helical membrane-spanning segments follow: residues 274 to 294 (IGIGYIAAVLVQIGCILLVVA), 304 to 324 (LVLFIIGLWWLVFTIPAALWL), 342 to 362 (WAWVSYIVFAWVSLGRTIVRA), 368 to 388 (VLLFLAAWFLLSDGIATVSGT), 401 to 421 (IAALGLINVIAMISGVLGAFS), 439 to 459 (ACICLFEVIPLYGLLGFLPFI), 464 to 484 (VIGLQQPWEMYVLGAIYGLVL), and 539 to 559 (AFGFLALLILLPLPLMLLVDV). Asn-582 is a glycosylation site (N-linked (GlcNAc...) asparagine).

This sequence belongs to the ATG22 family.

It is found in the vacuole membrane. In terms of biological role, vacuolar effluxer which mediate the efflux of amino acids resulting from autophagic degradation. The release of autophagic amino acids allows the maintenance of protein synthesis and viability during nitrogen starvation. In Coccidioides immitis (strain RS) (Valley fever fungus), this protein is Autophagy-related protein 22 (ATG22).